Consider the following 210-residue polypeptide: Synaptosomal-associated protein 25 (210 aa).

The interval 1-23 (MENSVENSMDPRSEQEEMQRCAD) is disordered. Residues 9 to 20 (MDPRSEQEEMQR) show a composition bias toward basic and acidic residues. T-SNARE coiled-coil homology domains lie at 23–85 (DQIT…LSDL) and 147–209 (DARE…ATKM).

Belongs to the SNAP-25 family.

It is found in the synapse. Its subcellular location is the synaptosome. The protein resides in the cell membrane. In terms of biological role, may play an important role in the synaptic function of specific neuronal systems. Associates with proteins involved in vesicle docking and membrane fusion. The polypeptide is Synaptosomal-associated protein 25 (snap25) (Torpedo marmorata (Marbled electric ray)).